A 49-amino-acid chain; its full sequence is Large ribosomal subunit protein bL33A (49 aa).

The protein belongs to the bacterial ribosomal protein bL33 family.

This Lactobacillus delbrueckii subsp. bulgaricus (strain ATCC 11842 / DSM 20081 / BCRC 10696 / JCM 1002 / NBRC 13953 / NCIMB 11778 / NCTC 12712 / WDCM 00102 / Lb 14) protein is Large ribosomal subunit protein bL33A.